An 85-amino-acid chain; its full sequence is Conotoxin Lv15a (85 aa).

The N-terminal stretch at 1–23 is a signal peptide; it reads MEKLTVLILVATVLLMIQVLAQS. Residues 24–49 constitute a propeptide that is removed on maturation; it reads GGDKHLKRRPKQYATKRLSALMRGHR. Position 50 is a pyrrolidone carboxylic acid (Q50).

Belongs to the conotoxin O2 superfamily. Contains 4 disulfide bonds. In terms of tissue distribution, expressed by the venom duct.

The protein localises to the secreted. This chain is Conotoxin Lv15a, found in Conus lividus (Livid cone).